Consider the following 142-residue polypeptide: Snaclec 2 (142 aa).

Residues 1–23 (MGRFIFVSFSLLVVFLSLSGTGA) form the signal peptide. Cys-25 and Cys-36 are disulfide-bonded. Residues 32–139 (YEGHCYRVFQ…CSETHNVICK (108 aa)) enclose the C-type lectin domain. Asn-43 carries N-linked (GlcNAc...) asparagine glycosylation. 2 disulfides stabilise this stretch: Cys-53–Cys-138 and Cys-115–Cys-130.

Belongs to the snaclec family. In terms of assembly, heterodimer; disulfide-linked. As to expression, expressed by the venom gland.

Its subcellular location is the secreted. Its function is as follows. Interferes with one step of hemostasis (modulation of platelet aggregation, or coagulation cascade, for example). The chain is Snaclec 2 from Sistrurus catenatus edwardsii (Desert massasauga).